Reading from the N-terminus, the 537-residue chain is Chaperonin GroEL (537 aa).

ATP contacts are provided by residues 29–32, 86–90, Gly-413, 477–479, and Asp-493; these read TLGP, DGTTT, and NAA.

This sequence belongs to the chaperonin (HSP60) family. In terms of assembly, forms a cylinder of 14 subunits composed of two heptameric rings stacked back-to-back. Interacts with the co-chaperonin GroES.

The protein localises to the cytoplasm. The enzyme catalyses ATP + H2O + a folded polypeptide = ADP + phosphate + an unfolded polypeptide.. In terms of biological role, together with its co-chaperonin GroES, plays an essential role in assisting protein folding. The GroEL-GroES system forms a nano-cage that allows encapsulation of the non-native substrate proteins and provides a physical environment optimized to promote and accelerate protein folding. In Bifidobacterium animalis subsp. lactis (strain AD011), this protein is Chaperonin GroEL.